Consider the following 508-residue polypeptide: Photosystem II CP47 reaction center protein (508 aa).

The next 6 helical transmembrane spans lie at 21-36 (SVHI…WAGS), 101-115 (IVFS…IWHW), 140-156 (GIHL…FGAF), 203-218 (IAAG…FHLS), 237-252 (VLSS…AFVV), and 457-472 (SFAL…HGAR).

Belongs to the PsbB/PsbC family. PsbB subfamily. In terms of assembly, PSII is composed of 1 copy each of membrane proteins PsbA, PsbB, PsbC, PsbD, PsbE, PsbF, PsbH, PsbI, PsbJ, PsbK, PsbL, PsbM, PsbT, PsbX, PsbY, PsbZ, Psb30/Ycf12, at least 3 peripheral proteins of the oxygen-evolving complex and a large number of cofactors. It forms dimeric complexes. The cofactor is Binds multiple chlorophylls. PSII binds additional chlorophylls, carotenoids and specific lipids..

It is found in the plastid. The protein resides in the chloroplast thylakoid membrane. Its function is as follows. One of the components of the core complex of photosystem II (PSII). It binds chlorophyll and helps catalyze the primary light-induced photochemical processes of PSII. PSII is a light-driven water:plastoquinone oxidoreductase, using light energy to abstract electrons from H(2)O, generating O(2) and a proton gradient subsequently used for ATP formation. The sequence is that of Photosystem II CP47 reaction center protein from Lactuca sativa (Garden lettuce).